Reading from the N-terminus, the 287-residue chain is 4-hydroxybenzoate octaprenyltransferase (287 aa).

6 helical membrane passes run 41–61 (WPLL…GCAM), 89–109 (WEAV…ILPL), 133–153 (FFAI…PMAF), 158–178 (DTVP…SVAY), 202–224 (FGRF…YVWI), and 266–286 (HNNW…LLAG).

The protein belongs to the UbiA prenyltransferase family. Mg(2+) is required as a cofactor.

It localises to the cell inner membrane. The catalysed reaction is all-trans-octaprenyl diphosphate + 4-hydroxybenzoate = 4-hydroxy-3-(all-trans-octaprenyl)benzoate + diphosphate. It participates in cofactor biosynthesis; ubiquinone biosynthesis. Its function is as follows. Catalyzes the prenylation of para-hydroxybenzoate (PHB) with an all-trans polyprenyl group. Mediates the second step in the final reaction sequence of ubiquinone-8 (UQ-8) biosynthesis, which is the condensation of the polyisoprenoid side chain with PHB, generating the first membrane-bound Q intermediate 3-octaprenyl-4-hydroxybenzoate. This is 4-hydroxybenzoate octaprenyltransferase from Burkholderia cenocepacia (strain HI2424).